A 159-amino-acid polypeptide reads, in one-letter code: Phosphopantetheine adenylyltransferase (159 aa).

Thr-9 provides a ligand contact to substrate. ATP-binding positions include 9–10 (TF) and His-17. The substrate site is built by Lys-41, Leu-73, and Arg-87. ATP contacts are provided by residues 88 to 90 (GLR), Glu-98, and 123 to 129 (YSFISST).

This sequence belongs to the bacterial CoaD family. In terms of assembly, homohexamer. Mg(2+) is required as a cofactor.

The protein resides in the cytoplasm. The enzyme catalyses (R)-4'-phosphopantetheine + ATP + H(+) = 3'-dephospho-CoA + diphosphate. It functions in the pathway cofactor biosynthesis; coenzyme A biosynthesis; CoA from (R)-pantothenate: step 4/5. Its function is as follows. Reversibly transfers an adenylyl group from ATP to 4'-phosphopantetheine, yielding dephospho-CoA (dPCoA) and pyrophosphate. This is Phosphopantetheine adenylyltransferase from Pseudomonas putida (strain ATCC 700007 / DSM 6899 / JCM 31910 / BCRC 17059 / LMG 24140 / F1).